Here is a 264-residue protein sequence, read N- to C-terminus: uncharacterized protein (264 aa).

The disordered stretch occupies residues 235–264; it reads ESSDEEDNDDDIINNDTNNDINNDDIEIKT. The segment covering 237–247 has biased composition (acidic residues); sequence SDEEDNDDDII.

This is an uncharacterized protein from Acanthamoeba polyphaga mimivirus (APMV).